Consider the following 165-residue polypeptide: MANPNKRIMNKKSKQASISSILNFFFFYIMEYFVAVDNETSLGVFTSIEQCEETMKQYPGLHYVVFKYTCPADAENTDVVYLIPSLTLHTPMFVDHCPNRTKQARHVLKKINLVFEEESIENWKVSVNTVFPHVHNRLSAPKLSIDEANEAVEKFLIQAGRLMSL.

A helical membrane pass occupies residues 16-36 (ASISSILNFFFFYIMEYFVAV).

The protein belongs to the asfivirus F165R family.

Its subcellular location is the host membrane. This is an uncharacterized protein from Ornithodoros (relapsing fever ticks).